Reading from the N-terminus, the 683-residue chain is Translation factor guf1, mitochondrial (683 aa).

The transit peptide at 1–43 (MRGCLQLARWLSAAPKGTAASLTRAPFVLANAPRYFTSSASRA) directs the protein to the mitochondrion. Residues 66–250 (ERYRNFCIVA…KIPAYGHFPV (185 aa)) enclose the tr-type G domain. Residues 75–82 (AHVDHGKS), 139–143 (DTPGH), and 193–196 (NKVD) each bind GTP.

It belongs to the TRAFAC class translation factor GTPase superfamily. Classic translation factor GTPase family. LepA subfamily.

It is found in the mitochondrion inner membrane. It carries out the reaction GTP + H2O = GDP + phosphate + H(+). Promotes mitochondrial protein synthesis. May act as a fidelity factor of the translation reaction, by catalyzing a one-codon backward translocation of tRNAs on improperly translocated ribosomes. Binds to mitochondrial ribosomes in a GTP-dependent manner. The protein is Translation factor guf1, mitochondrial (guf1) of Aspergillus fumigatus (strain ATCC MYA-4609 / CBS 101355 / FGSC A1100 / Af293) (Neosartorya fumigata).